Here is a 323-residue protein sequence, read N- to C-terminus: Fructose-1,6-bisphosphatase class 1 (323 aa).

Residues E93, D114, L116, and D117 each contribute to the Mg(2+) site. Substrate is bound by residues 117–120 (DGSS), N205, Y233, and K263. E269 contacts Mg(2+).

It belongs to the FBPase class 1 family. In terms of assembly, homotetramer. Mg(2+) serves as cofactor.

Its subcellular location is the cytoplasm. It catalyses the reaction beta-D-fructose 1,6-bisphosphate + H2O = beta-D-fructose 6-phosphate + phosphate. Its pathway is carbohydrate biosynthesis; gluconeogenesis. The sequence is that of Fructose-1,6-bisphosphatase class 1 from Sulfurihydrogenibium sp. (strain YO3AOP1).